A 401-amino-acid chain; its full sequence is Voltage-gated potassium channel subunit beta-3 (401 aa).

2 stretches are compositionally biased toward polar residues: residues 1 to 14 (MQVS…TLRS) and 32 to 41 (GVSMAQTKQR). The segment at 1-49 (MQVSFACTEQTLRSRTSEDRLCPSRPSGGQNGVSMAQTKQRTPPMGAKN) is disordered. Residues threonine 90, tryptophan 91, glutamine 97, and aspartate 119 each coordinate NADP(+). Residue tyrosine 124 is the Proton donor/acceptor of the active site. The NADP(+) site is built by asparagine 192, serine 222, arginine 223, glutamine 248, tryptophan 277, serine 278, proline 279, leucine 280, alanine 281, cysteine 282, lysine 288, arginine 298, glycine 357, serine 359, glutamine 363, glutamate 366, and asparagine 367.

Belongs to the shaker potassium channel beta subunit family. In terms of assembly, forms heteromultimeric complex with alpha subunits. Identified in potassium channel complexes containing KCNA1 and KCNA2.

It localises to the cytoplasm. In terms of biological role, regulatory subunit of the voltage-gated potassium (Kv) channels composed of pore-forming and potassium-conducting alpha subunits and of regulatory beta subunit. The beta-3/KCNAB3 subunit may mediate closure of potassium channels. Increases and accelerates inactivation of Kv1.1/KCNA1 and Kv2.2/KCNA2 subunit-containing channels. May display nicotinamide adenine dinucleotide phosphate (NADPH)-dependent aldoketoreductase activity. The binding of oxidized and reduced NADP(H) cofactors may be required for the regulation of potassium channel activity. This chain is Voltage-gated potassium channel subunit beta-3 (kcnab3), found in Xenopus laevis (African clawed frog).